The primary structure comprises 126 residues: Protein FMP49, mitochondrial (126 aa).

It is found in the mitochondrion. The chain is Protein FMP49, mitochondrial from Saccharomyces cerevisiae (strain ATCC 204508 / S288c) (Baker's yeast).